We begin with the raw amino-acid sequence, 61 residues long: Short neurotoxin 4 (61 aa).

Cystine bridges form between C3/C23, C17/C40, C42/C53, and C54/C59.

It belongs to the three-finger toxin family. Short-chain subfamily. Type I alpha-neurotoxin sub-subfamily. In terms of tissue distribution, expressed by the venom gland.

The protein localises to the secreted. Functionally, binds to muscle nicotinic acetylcholine receptor (nAChR) and inhibit acetylcholine from binding to the receptor, thereby impairing neuromuscular transmission. The polypeptide is Short neurotoxin 4 (Naja annulifera (Banded Egyptian cobra)).